Consider the following 371-residue polypeptide: Aminomethyltransferase (371 aa).

It belongs to the GcvT family. The glycine cleavage system is composed of four proteins: P, T, L and H.

It catalyses the reaction N(6)-[(R)-S(8)-aminomethyldihydrolipoyl]-L-lysyl-[protein] + (6S)-5,6,7,8-tetrahydrofolate = N(6)-[(R)-dihydrolipoyl]-L-lysyl-[protein] + (6R)-5,10-methylene-5,6,7,8-tetrahydrofolate + NH4(+). The glycine cleavage system catalyzes the degradation of glycine. This Leptospira interrogans serogroup Icterohaemorrhagiae serovar Lai (strain 56601) protein is Aminomethyltransferase.